A 268-amino-acid chain; its full sequence is Phosphatidylglycerol--prolipoprotein diacylglyceryl transferase (268 aa).

The next 7 helical transmembrane spans lie at 27–47 (PALR…MWLL), 66–86 (LLFY…VLFY), 104–124 (GGMS…YIAW), 130–150 (FFAV…AGRI), 181–201 (PSQL…LYWF), 208–228 (VGAV…IVET), and 242–262 (FMTM…YLIL). Arg149 contacts a 1,2-diacyl-sn-glycero-3-phospho-(1'-sn-glycerol).

It belongs to the Lgt family.

The protein localises to the cell inner membrane. The enzyme catalyses L-cysteinyl-[prolipoprotein] + a 1,2-diacyl-sn-glycero-3-phospho-(1'-sn-glycerol) = an S-1,2-diacyl-sn-glyceryl-L-cysteinyl-[prolipoprotein] + sn-glycerol 1-phosphate + H(+). It participates in protein modification; lipoprotein biosynthesis (diacylglyceryl transfer). Functionally, catalyzes the transfer of the diacylglyceryl group from phosphatidylglycerol to the sulfhydryl group of the N-terminal cysteine of a prolipoprotein, the first step in the formation of mature lipoproteins. This is Phosphatidylglycerol--prolipoprotein diacylglyceryl transferase from Shewanella sp. (strain MR-4).